Here is a 157-residue protein sequence, read N- to C-terminus: SsrA-binding protein (157 aa).

Over residues 138–151 (ATEAKRDWGREKQR) the composition is skewed to basic and acidic residues. The tract at residues 138–157 (ATEAKRDWGREKQRLLKQHS) is disordered.

This sequence belongs to the SmpB family.

It localises to the cytoplasm. Functionally, required for rescue of stalled ribosomes mediated by trans-translation. Binds to transfer-messenger RNA (tmRNA), required for stable association of tmRNA with ribosomes. tmRNA and SmpB together mimic tRNA shape, replacing the anticodon stem-loop with SmpB. tmRNA is encoded by the ssrA gene; the 2 termini fold to resemble tRNA(Ala) and it encodes a 'tag peptide', a short internal open reading frame. During trans-translation Ala-aminoacylated tmRNA acts like a tRNA, entering the A-site of stalled ribosomes, displacing the stalled mRNA. The ribosome then switches to translate the ORF on the tmRNA; the nascent peptide is terminated with the 'tag peptide' encoded by the tmRNA and targeted for degradation. The ribosome is freed to recommence translation, which seems to be the essential function of trans-translation. The polypeptide is SsrA-binding protein (Cereibacter sphaeroides (strain ATCC 17025 / ATH 2.4.3) (Rhodobacter sphaeroides)).